The sequence spans 264 residues: Thymidylate synthase (264 aa).

R21 contacts dUMP. H51 is a binding site for (6R)-5,10-methylene-5,6,7,8-tetrahydrofolate. 126-127 (RR) is a dUMP binding site. Residue C146 is the Nucleophile of the active site. Residues 166 to 169 (RSAD), N177, and 207 to 209 (HIY) each bind dUMP. Residue D169 coordinates (6R)-5,10-methylene-5,6,7,8-tetrahydrofolate. Residue A263 coordinates (6R)-5,10-methylene-5,6,7,8-tetrahydrofolate.

Belongs to the thymidylate synthase family. Bacterial-type ThyA subfamily. In terms of assembly, homodimer.

It localises to the cytoplasm. The enzyme catalyses dUMP + (6R)-5,10-methylene-5,6,7,8-tetrahydrofolate = 7,8-dihydrofolate + dTMP. Its pathway is pyrimidine metabolism; dTTP biosynthesis. Functionally, catalyzes the reductive methylation of 2'-deoxyuridine-5'-monophosphate (dUMP) to 2'-deoxythymidine-5'-monophosphate (dTMP) while utilizing 5,10-methylenetetrahydrofolate (mTHF) as the methyl donor and reductant in the reaction, yielding dihydrofolate (DHF) as a by-product. This enzymatic reaction provides an intracellular de novo source of dTMP, an essential precursor for DNA biosynthesis. The polypeptide is Thymidylate synthase (Coxiella burnetii (strain Dugway 5J108-111)).